Reading from the N-terminus, the 338-residue chain is (-)-alpha-amorphene synthase ((2E,6E)-farnesyl diphosphate cyclizing) (338 aa).

Residues Asp105 and Glu109 each contribute to the Mg(2+) site. The short motif at Asp105–Glu109 is the DDXXE motif element. Arg196 lines the substrate pocket. Ser246 contributes to the Mg(2+) binding site. Residue Lys249 coordinates substrate. Glu250 is a Mg(2+) binding site. Substrate is bound at residue Arg327–Tyr328.

Belongs to the terpene synthase family. Requires Mg(2+) as cofactor.

The enzyme catalyses (2E,6E)-farnesyl diphosphate = (-)-alpha-amorphene + diphosphate. The protein operates within secondary metabolite biosynthesis; terpenoid biosynthesis. Its function is as follows. Catalyzes the conversion of (2E,6E)-farnesyl diphosphate (FPP) to yield the bicyclic sesquiterpene (1R,6S,7S)-(-)-alpha-amorphene via a probable 1,6-cyclization, which could involve the abstraction of the pyrophosphate from FPP to yield a (R)-bisabolyl cation. The only accepted substrate is (2E,6E)-farnesyl diphosphate (FPP). The protein is (-)-alpha-amorphene synthase ((2E,6E)-farnesyl diphosphate cyclizing) of Streptomyces viridochromogenes (strain DSM 40736 / JCM 4977 / BCRC 1201 / Tue 494).